Here is a 343-residue protein sequence, read N- to C-terminus: Pyridoxal 5'-phosphate synthase subunit PDX1 (343 aa).

Asp-73 contributes to the D-ribose 5-phosphate binding site. Lys-130 acts as the Schiff-base intermediate with D-ribose 5-phosphate in catalysis. Residue Gly-202 participates in D-ribose 5-phosphate binding. A D-glyceraldehyde 3-phosphate-binding site is contributed by Gln-214. D-ribose 5-phosphate is bound by residues Gly-263 and 284 to 285 (GS).

Belongs to the PdxS/SNZ family.

The enzyme catalyses aldehydo-D-ribose 5-phosphate + D-glyceraldehyde 3-phosphate + L-glutamine = pyridoxal 5'-phosphate + L-glutamate + phosphate + 3 H2O + H(+). Its pathway is cofactor biosynthesis; pyridoxal 5'-phosphate biosynthesis. Catalyzes the formation of pyridoxal 5'-phosphate from ribose 5-phosphate (RBP), glyceraldehyde 3-phosphate (G3P) and ammonia. The ammonia is provided by PDX2. Can also use ribulose 5-phosphate and dihydroxyacetone phosphate as substrates, resulting from enzyme-catalyzed isomerization of RBP and G3P, respectively. Also plays an indirect role in resistance to singlet oxygen-generating photosensitizers. In Cercospora nicotianae (Barn spot disease fungus), this protein is Pyridoxal 5'-phosphate synthase subunit PDX1 (PDX1).